We begin with the raw amino-acid sequence, 813 residues long: Protein mac-1 (813 aa).

Coiled coils occupy residues 58 to 89 (VREA…VQEI) and 122 to 152 (SDDS…TVLN). Disordered stretches follow at residues 97-131 (TRKR…ERAA) and 152-193 (NLYT…GAVS). Over residues 158–172 (SAPSTPVSTPKNQAT) the composition is skewed to polar residues. Residues 175 to 191 (PPGASAAPPALPRGLGA) are compositionally biased toward low complexity. ATP contacts are provided by residues 246 to 253 (GPPGCGKT) and 575 to 582 (GPPGCGKT).

The protein belongs to the AAA ATPase family. As to quaternary structure, found in a complex composed of ced-3, ced-4 and mac-1 or of ced-9, ced-4 and mac-1. Within the complex, interacts with ced-4.

Functionally, probably together with ced-9, plays a modest role in preventing ced-4 and caspase ced-3-mediated apoptosis. This chain is Protein mac-1, found in Caenorhabditis elegans.